The sequence spans 255 residues: Large ribosomal subunit protein uL4 (255 aa).

The protein belongs to the universal ribosomal protein uL4 family. Part of the 50S ribosomal subunit.

In terms of biological role, one of the primary rRNA binding proteins, this protein initially binds near the 5'-end of the 23S rRNA. It is important during the early stages of 50S assembly. It makes multiple contacts with different domains of the 23S rRNA in the assembled 50S subunit and ribosome. Forms part of the polypeptide exit tunnel. The chain is Large ribosomal subunit protein uL4 from Pyrococcus horikoshii (strain ATCC 700860 / DSM 12428 / JCM 9974 / NBRC 100139 / OT-3).